Consider the following 302-residue polypeptide: Lipooligosaccharide biosynthesis protein lex-1 (302 aa).

7 tandem repeats follow at residues 42-45 (SINQ), 46-49 (SINQ), 50-53 (SINQ), 54-57 (SINQ), 58-61 (SINQ), 62-65 (SINQ), and 66-69 (SINQ). The segment at 42-69 (SINQSINQSINQSINQSINQSINQSINQ) is 7 X 4 AA tandem repeats of S-I-N-Q.

The protein belongs to the glycosyltransferase 25 family.

Its function is as follows. Involved in extracellular lipooligosaccharide (LOS) biosynthesis and virulence expression. Involved in the synthesis of the oligosaccharide moiety of the LOS molecule by adding GalNAc. The protein is Lipooligosaccharide biosynthesis protein lex-1 (lex1) of Haemophilus influenzae (strain ATCC 51907 / DSM 11121 / KW20 / Rd).